The primary structure comprises 238 residues: Large ribosomal subunit protein uL2 (238 aa).

Residues 201–238 form a disordered region; it reads PFGGGGRQHPGRPKTVSRNTPPGRKVGSIAARRTGVGH.

It belongs to the universal ribosomal protein uL2 family. Part of the 50S ribosomal subunit. Forms a bridge to the 30S subunit in the 70S ribosome.

One of the primary rRNA binding proteins. Required for association of the 30S and 50S subunits to form the 70S ribosome, for tRNA binding and peptide bond formation. It has been suggested to have peptidyltransferase activity; this is somewhat controversial. Makes several contacts with the 16S rRNA in the 70S ribosome. The chain is Large ribosomal subunit protein uL2 from Methanocella arvoryzae (strain DSM 22066 / NBRC 105507 / MRE50).